Consider the following 470-residue polypeptide: Glutamyl-tRNA(Gln) amidotransferase subunit A (470 aa).

Active-site charge relay system residues include Lys71 and Ser146. The active-site Acyl-ester intermediate is the Ser170.

It belongs to the amidase family. GatA subfamily. In terms of assembly, heterotrimer of A, B and C subunits.

It carries out the reaction L-glutamyl-tRNA(Gln) + L-glutamine + ATP + H2O = L-glutaminyl-tRNA(Gln) + L-glutamate + ADP + phosphate + H(+). Functionally, allows the formation of correctly charged Gln-tRNA(Gln) through the transamidation of misacylated Glu-tRNA(Gln) in organisms which lack glutaminyl-tRNA synthetase. The reaction takes place in the presence of glutamine and ATP through an activated gamma-phospho-Glu-tRNA(Gln). In Akkermansia muciniphila (strain ATCC BAA-835 / DSM 22959 / JCM 33894 / BCRC 81048 / CCUG 64013 / CIP 107961 / Muc), this protein is Glutamyl-tRNA(Gln) amidotransferase subunit A.